Reading from the N-terminus, the 227-residue chain is Large ribosomal subunit protein uL10c (227 aa).

A chloroplast-targeting transit peptide spans 1-47; that stretch reads MEATFFTLPSSTSHSYPFSLKSHFNNSLTLPTHPHFKPKSKNLTIRS.

The protein belongs to the universal ribosomal protein uL10 family. Part of the 50S ribosomal subunit.

Its subcellular location is the plastid. The protein localises to the chloroplast. In terms of biological role, this protein binds directly to 23S ribosomal RNA. The chain is Large ribosomal subunit protein uL10c (RPL10) from Nicotiana tabacum (Common tobacco).